The chain runs to 317 residues: Transaldolase (317 aa).

Lys132 (schiff-base intermediate with substrate) is an active-site residue.

Belongs to the transaldolase family. Type 1 subfamily. As to quaternary structure, homodimer.

Its subcellular location is the cytoplasm. The enzyme catalyses D-sedoheptulose 7-phosphate + D-glyceraldehyde 3-phosphate = D-erythrose 4-phosphate + beta-D-fructose 6-phosphate. Its pathway is carbohydrate degradation; pentose phosphate pathway; D-glyceraldehyde 3-phosphate and beta-D-fructose 6-phosphate from D-ribose 5-phosphate and D-xylulose 5-phosphate (non-oxidative stage): step 2/3. Functionally, transaldolase is important for the balance of metabolites in the pentose-phosphate pathway. The protein is Transaldolase (talB) of Escherichia coli O104:H4 (strain 2009EL-2071).